The chain runs to 179 residues: Large ribosomal subunit protein uL5 (179 aa).

This sequence belongs to the universal ribosomal protein uL5 family. As to quaternary structure, part of the 50S ribosomal subunit; part of the 5S rRNA/L5/L18/L25 subcomplex. Contacts the 5S rRNA and the P site tRNA. Forms a bridge to the 30S subunit in the 70S ribosome.

In terms of biological role, this is one of the proteins that bind and probably mediate the attachment of the 5S RNA into the large ribosomal subunit, where it forms part of the central protuberance. In the 70S ribosome it contacts protein S13 of the 30S subunit (bridge B1b), connecting the 2 subunits; this bridge is implicated in subunit movement. Contacts the P site tRNA; the 5S rRNA and some of its associated proteins might help stabilize positioning of ribosome-bound tRNAs. In Neisseria meningitidis serogroup A / serotype 4A (strain DSM 15465 / Z2491), this protein is Large ribosomal subunit protein uL5.